The sequence spans 462 residues: Sensor histidine kinase ZraS (462 aa).

Topologically, residues 1–14 (MNVMRLSKDSVAVG) are cytoplasmic. The helical transmembrane segment at 15-35 (LSWLLTGLILLLVCLFSALIV) threads the bilayer. The Periplasmic segment spans residues 36–197 (RDYGRENEAA…ADHARGLRNM (162 aa)). The chain crosses the membrane as a helical span at residues 198-218 (VIMLCAAGVVMAATVLAQFWF). The Cytoplasmic portion of the chain corresponds to 219–462 (RRYQRSRKQL…VNGQQKDEQG (244 aa)). In terms of domain architecture, Histidine kinase spans 247–455 (GVAHEIRNPL…LFTFYLPVNG (209 aa)). At H250 the chain carries Phosphohistidine; by autocatalysis.

Post-translationally, autophosphorylated.

It is found in the cell inner membrane. The enzyme catalyses ATP + protein L-histidine = ADP + protein N-phospho-L-histidine.. Its activity is regulated as follows. Activity of the ZraS/ZraR two-component system is repressed by the zinc-bound form of ZraP, which probably interacts with the periplasmic region of ZraS. In terms of biological role, part of the Zra signaling pathway, an envelope stress response (ESR) system composed of the periplasmic accessory protein ZraP, the histidine kinase ZraS and the transcriptional regulator ZraR. The ZraPSR system contributes to antibiotic resistance and is important for membrane integrity in the presence of membrane-targeting biocides. ZraS is a member of the two-component regulatory system ZraS/ZraR. Functions as a membrane-associated sensor kinase that phosphorylates ZraR in response to high concentrations of Zn(2+) or Pb(2+) in the medium. This chain is Sensor histidine kinase ZraS (zraS), found in Klebsiella oxytoca.